The sequence spans 437 residues: Adenylosuccinate synthetase (437 aa).

GTP contacts are provided by residues 12–18 and 40–42; these read GDEGKGK and GHT. Asp-13 (proton acceptor) is an active-site residue. Mg(2+) is bound by residues Asp-13 and Gly-40. Residues 13-16, 38-41, Thr-128, Arg-142, Gln-223, Thr-238, and Arg-302 contribute to the IMP site; these read DEGK and NAGH. Residue His-41 is the Proton donor of the active site. The segment at 119–138 is disordered; sequence QRGERRIGTTGRGIGPTYAD. 298–304 serves as a coordination point for substrate; the sequence is TTTGRRR. Residues Arg-304, 330 to 332, and 412 to 414 contribute to the GTP site; these read KLD and SLG.

This sequence belongs to the adenylosuccinate synthetase family. As to quaternary structure, homodimer. It depends on Mg(2+) as a cofactor.

The protein resides in the cytoplasm. The enzyme catalyses IMP + L-aspartate + GTP = N(6)-(1,2-dicarboxyethyl)-AMP + GDP + phosphate + 2 H(+). The protein operates within purine metabolism; AMP biosynthesis via de novo pathway; AMP from IMP: step 1/2. Functionally, plays an important role in the de novo pathway of purine nucleotide biosynthesis. Catalyzes the first committed step in the biosynthesis of AMP from IMP. The protein is Adenylosuccinate synthetase of Synechococcus sp. (strain WH7803).